The primary structure comprises 301 residues: MTAKFNVKTFQGMILALQDYWANQGCTVVQPFDMEVGAGTSHPMTCLRALGPEPMAFAYVQPSRRPTDGRYGENPNRLQHYYQFQVVIKPSPDNIQELYLDSLKMLGFDPTQNDIRFVEDNWENPTLGAWGLGWEVWLNGMEVTQFTYFQQVGGLECKPVTGEITYGLERLAMYIQGVDSVYDLVWSDGPLGKTTYGDVFHQNEVEQSTYNFEYANTDFLFYCFDQYEKEAQELLALEKPLPLPAYERILKAAHSFNLLDARKAISVTERQRYILRIRTLTKGVAEAYYASREALGFPGCK.

The protein belongs to the class-II aminoacyl-tRNA synthetase family. As to quaternary structure, tetramer of two alpha and two beta subunits.

It is found in the cytoplasm. It carries out the reaction tRNA(Gly) + glycine + ATP = glycyl-tRNA(Gly) + AMP + diphosphate. The chain is Glycine--tRNA ligase alpha subunit from Glaesserella parasuis serovar 5 (strain SH0165) (Haemophilus parasuis).